A 122-amino-acid chain; its full sequence is Large ribosomal subunit protein uL14 (122 aa).

The protein belongs to the universal ribosomal protein uL14 family. Part of the 50S ribosomal subunit. Forms a cluster with proteins L3 and L19. In the 70S ribosome, L14 and L19 interact and together make contacts with the 16S rRNA in bridges B5 and B8.

Its function is as follows. Binds to 23S rRNA. Forms part of two intersubunit bridges in the 70S ribosome. The sequence is that of Large ribosomal subunit protein uL14 from Salinispora tropica (strain ATCC BAA-916 / DSM 44818 / JCM 13857 / NBRC 105044 / CNB-440).